A 269-amino-acid chain; its full sequence is Cytochrome c oxidase subunit 3 (269 aa).

6 consecutive transmembrane segments (helical) span residues 46-66 (NSYY…AFWF), 90-110 (GVIL…WAFF), 138-160 (PLLN…HSLI), 167-187 (ALYG…FQGV), 207-227 (FGTG…AVAL), and 247-267 (ILYW…IYYW).

It belongs to the cytochrome c oxidase subunit 3 family. Component of the cytochrome c oxidase (complex IV, CIV), a multisubunit enzyme composed of a catalytic core of 3 subunits and several supernumerary subunits. The complex exists as a monomer or a dimer and forms supercomplexes (SCs) in the inner mitochondrial membrane with ubiquinol-cytochrome c oxidoreductase (cytochrome b-c1 complex, complex III, CIII).

The protein resides in the mitochondrion inner membrane. The enzyme catalyses 4 Fe(II)-[cytochrome c] + O2 + 8 H(+)(in) = 4 Fe(III)-[cytochrome c] + 2 H2O + 4 H(+)(out). Functionally, component of the cytochrome c oxidase, the last enzyme in the mitochondrial electron transport chain which drives oxidative phosphorylation. The respiratory chain contains 3 multisubunit complexes succinate dehydrogenase (complex II, CII), ubiquinol-cytochrome c oxidoreductase (cytochrome b-c1 complex, complex III, CIII) and cytochrome c oxidase (complex IV, CIV), that cooperate to transfer electrons derived from NADH and succinate to molecular oxygen, creating an electrochemical gradient over the inner membrane that drives transmembrane transport and the ATP synthase. Cytochrome c oxidase is the component of the respiratory chain that catalyzes the reduction of oxygen to water. Electrons originating from reduced cytochrome c in the intermembrane space (IMS) are transferred via the dinuclear copper A center (CU(A)) of subunit 2 and heme A of subunit 1 to the active site in subunit 1, a binuclear center (BNC) formed by heme A3 and copper B (CU(B)). The BNC reduces molecular oxygen to 2 water molecules using 4 electrons from cytochrome c in the IMS and 4 protons from the mitochondrial matrix. This is Cytochrome c oxidase subunit 3 (COIII) from Podospora anserina (strain S / ATCC MYA-4624 / DSM 980 / FGSC 10383) (Pleurage anserina).